A 391-amino-acid chain; its full sequence is GDSL esterase/lipase 22 (391 aa).

Residues 1-29 (MMANNCNLVSVLCVILVLTLFHNPITVAG) form the signal peptide. The Nucleophile role is filled by Ser43. Residues Asn105, Asn165, and Asn288 are each glycosylated (N-linked (GlcNAc...) asparagine). Catalysis depends on residues Asp322 and His325. Residues 372-391 (PATVHASDSSSSTSRGYEYY) are disordered.

The protein belongs to the 'GDSL' lipolytic enzyme family. In terms of assembly, component of the PYK10 complex, at least composed of PYK10/BGLU23, BGLU21, BGLU22, JAL22, JAL23, PBP1/JAL30, PBP2/JAL31, JAL32, JAL33, JAL34, JAL35, GLL22 and GLL23.

It is found in the secreted. This is GDSL esterase/lipase 22 (GLL22) from Arabidopsis thaliana (Mouse-ear cress).